Consider the following 163-residue polypeptide: MRCPKCNYLKSSVVDSRQAEEGNTIRRRRECENCHTRFTTFERIEELPLLVVKKDGTREQFSRDKIFNGIIRSAQKRPVSSSAIEKVVNDIEQKIRSDYDSEVSSVVIGNLVMDELAELDEITYVRFASVYRSFKDVDEIEALLQQITNRVRSKKKRKADETN.

A zinc finger lies at 3-34; it reads CPKCNYLKSSVVDSRQAEEGNTIRRRRECENC. The 91-residue stretch at 49 to 139 folds into the ATP-cone domain; sequence LLVVKKDGTR…VYRSFKDVDE (91 aa).

Belongs to the NrdR family. Zn(2+) serves as cofactor.

Functionally, negatively regulates transcription of bacterial ribonucleotide reductase nrd genes and operons by binding to NrdR-boxes. The protein is Transcriptional repressor NrdR of Streptococcus mutans serotype c (strain ATCC 700610 / UA159).